The chain runs to 599 residues: Cytochrome P450 monooxygenase ALT8 (599 aa).

2 consecutive transmembrane segments (helical) span residues 4-21 (LACV…VYLG) and 36-56 (ILFG…PAYF). N-linked (GlcNAc...) asparagine glycosylation is present at Asn127. Over residues 495-504 (DDSSAASPSF) the composition is skewed to low complexity. Residues 495–522 (DDSSAASPSFGGSGKRKSQYTDTHKEPS) are disordered. Cys539 contributes to the heme binding site.

This sequence belongs to the cytochrome P450 family. Heme serves as cofactor.

The protein resides in the membrane. The protein operates within secondary metabolite biosynthesis. In terms of biological role, cytochrome P450 monooxygenase; part of the gene cluster that mediates the biosynthesis of the host-selective toxins (HSTs) AAL-toxins, sphinganine-analog mycotoxins responsible for Alternaria stem canker on tomato by the tomato pathotype. The biosynthesis starts with the polyketide synthase ALT1-catalyzed C-16 carbon chain assembly from one starter acetyl-CoA unit with malonyl-CoA extender units. ALT1 also selectively transfers methyl groups at the first and the third cycle of chain elongation for AAL toxin. The C-16 polyketide chain is released from the enzyme by a nucleophilic attack of a carbanion, which is derived from R-carbon of glycin by decarboxylation, on the carbonyl carbon of polyketide acyl chain. This step is probably catalyzed by a pyridoxal 5'-phosphate-dependent aminoacyl transferase ALT4. The respective functions of the other enzymes encoded by the cluster have still to be elucidated. The sphingosine N-acyltransferase-like protein ALT7 seems not to act as a resistance/self-tolerance factor against the toxin in the toxin biosynthetic gene cluster, contrary to what is expected. In Alternaria alternata (Alternaria rot fungus), this protein is Cytochrome P450 monooxygenase ALT8.